A 187-amino-acid chain; its full sequence is Large ribosomal subunit protein bL17 (187 aa).

Residues 122–187 are disordered; that stretch reads PKVRSSRTST…EADAAEKSDK (66 aa). Positions 127–144 are enriched in low complexity; sequence SRTSTATAPAAAAPAAEA. Composition is skewed to acidic residues over residues 145-157 and 165-180; these read PAEESDVPVEETD and TPAETTDEAAAEVEAD.

The protein belongs to the bacterial ribosomal protein bL17 family. In terms of assembly, part of the 50S ribosomal subunit. Contacts protein L32.

The polypeptide is Large ribosomal subunit protein bL17 (Clavibacter michiganensis subsp. michiganensis (strain NCPPB 382)).